The chain runs to 436 residues: Trigger factor (436 aa).

The PPIase FKBP-type domain maps to 161 to 246 (EDQLNIDFVG…VNTVSEPKLP (86 aa)).

It belongs to the FKBP-type PPIase family. Tig subfamily.

The protein resides in the cytoplasm. The enzyme catalyses [protein]-peptidylproline (omega=180) = [protein]-peptidylproline (omega=0). In terms of biological role, involved in protein export. Acts as a chaperone by maintaining the newly synthesized protein in an open conformation. Functions as a peptidyl-prolyl cis-trans isomerase. In Pseudomonas savastanoi pv. phaseolicola (strain 1448A / Race 6) (Pseudomonas syringae pv. phaseolicola (strain 1448A / Race 6)), this protein is Trigger factor.